A 338-amino-acid chain; its full sequence is Ketol-acid reductoisomerase (NADP(+)) (338 aa).

The KARI N-terminal Rossmann domain maps to 1–181 (MQIYYDKDAD…GGGRAGIIET (181 aa)). NADP(+)-binding positions include 24–27 (YGSQ), Arg47, Ser50, Ser52, and 82–85 (DEHQ). The active site involves His107. Gly133 is an NADP(+) binding site. The 146-residue stretch at 182-327 (TFREETETDL…ARLRDMMPWI (146 aa)) folds into the KARI C-terminal knotted domain. Mg(2+)-binding residues include Asp190, Glu194, Glu226, and Glu230. Residue Ser251 coordinates substrate.

This sequence belongs to the ketol-acid reductoisomerase family. Mg(2+) is required as a cofactor.

The enzyme catalyses (2R)-2,3-dihydroxy-3-methylbutanoate + NADP(+) = (2S)-2-acetolactate + NADPH + H(+). It catalyses the reaction (2R,3R)-2,3-dihydroxy-3-methylpentanoate + NADP(+) = (S)-2-ethyl-2-hydroxy-3-oxobutanoate + NADPH + H(+). It participates in amino-acid biosynthesis; L-isoleucine biosynthesis; L-isoleucine from 2-oxobutanoate: step 2/4. It functions in the pathway amino-acid biosynthesis; L-valine biosynthesis; L-valine from pyruvate: step 2/4. In terms of biological role, involved in the biosynthesis of branched-chain amino acids (BCAA). Catalyzes an alkyl-migration followed by a ketol-acid reduction of (S)-2-acetolactate (S2AL) to yield (R)-2,3-dihydroxy-isovalerate. In the isomerase reaction, S2AL is rearranged via a Mg-dependent methyl migration to produce 3-hydroxy-3-methyl-2-ketobutyrate (HMKB). In the reductase reaction, this 2-ketoacid undergoes a metal-dependent reduction by NADPH to yield (R)-2,3-dihydroxy-isovalerate. This Methylococcus capsulatus (strain ATCC 33009 / NCIMB 11132 / Bath) protein is Ketol-acid reductoisomerase (NADP(+)).